The sequence spans 430 residues: Enolase (430 aa).

Gln167 is a (2R)-2-phosphoglycerate binding site. Glu209 functions as the Proton donor in the catalytic mechanism. 3 residues coordinate Mg(2+): Asp246, Glu289, and Asp316. Residues Lys341, Arg370, Ser371, and Lys392 each coordinate (2R)-2-phosphoglycerate. Catalysis depends on Lys341, which acts as the Proton acceptor.

This sequence belongs to the enolase family. As to quaternary structure, component of the RNA degradosome, a multiprotein complex involved in RNA processing and mRNA degradation. It depends on Mg(2+) as a cofactor.

Its subcellular location is the cytoplasm. It localises to the secreted. It is found in the cell surface. The catalysed reaction is (2R)-2-phosphoglycerate = phosphoenolpyruvate + H2O. Its pathway is carbohydrate degradation; glycolysis; pyruvate from D-glyceraldehyde 3-phosphate: step 4/5. In terms of biological role, catalyzes the reversible conversion of 2-phosphoglycerate (2-PG) into phosphoenolpyruvate (PEP). It is essential for the degradation of carbohydrates via glycolysis. This Idiomarina loihiensis (strain ATCC BAA-735 / DSM 15497 / L2-TR) protein is Enolase.